A 202-amino-acid chain; its full sequence is LexA repressor (202 aa).

The H-T-H motif DNA-binding region spans 28 to 48; that stretch reads RAEIAQRLGFRSPNAAEEHLK. Residues Ser-119 and Lys-156 each act as for autocatalytic cleavage activity in the active site.

Belongs to the peptidase S24 family. In terms of assembly, homodimer.

The catalysed reaction is Hydrolysis of Ala-|-Gly bond in repressor LexA.. Represses a number of genes involved in the response to DNA damage (SOS response), including recA and lexA. Binds to the 16 bp palindromic sequence 5'-CTGTATATATATACAG-3'. In the presence of single-stranded DNA, RecA interacts with LexA causing an autocatalytic cleavage which disrupts the DNA-binding part of LexA, leading to derepression of the SOS regulon and eventually DNA repair. The polypeptide is LexA repressor (Enterobacter sp. (strain 638)).